The sequence spans 93 residues: MADITDIKSIVYTEKALNLQEQGVLVVQTTPKVTKNQLKEIFKEYFGVTPLKVNSLRQKGKVKRFRGIEGKRPDYKKFYVKLPEDAKLESLSV.

It belongs to the universal ribosomal protein uL23 family. Part of the 50S ribosomal subunit. Contacts protein L29, and trigger factor when it is bound to the ribosome.

Its function is as follows. One of the early assembly proteins it binds 23S rRNA. One of the proteins that surrounds the polypeptide exit tunnel on the outside of the ribosome. Forms the main docking site for trigger factor binding to the ribosome. The chain is Large ribosomal subunit protein uL23 from Nautilia profundicola (strain ATCC BAA-1463 / DSM 18972 / AmH).